Consider the following 284-residue polypeptide: MAEITAKMVADLRAATGLGMMECKKALVEAEGNFDKAEEILRIKSGAKAGKLAGRTAAEGVLAYAINGNVGALVEVNCETDFVAKDAGFVEFANFVAKTAAEKKPASVEELSELVEAERKAIIAKLGENMSVRRFQVIDTANQLVAYIHGALATEGVLVEYKGSEDVARKIGMHIVAAKPQCVSEAEVDAETVEKERHIYTEQAIASGKPADIAAKMVEGRIRKFLAEITLNGQAFVMNPDQTVAQFAKENGTEVVSFVRYKVGDGIEKAVVDYAAEVAAAAKV.

Residues 80 to 83 (TDFV) are involved in Mg(2+) ion dislocation from EF-Tu.

The protein belongs to the EF-Ts family.

It localises to the cytoplasm. Associates with the EF-Tu.GDP complex and induces the exchange of GDP to GTP. It remains bound to the aminoacyl-tRNA.EF-Tu.GTP complex up to the GTP hydrolysis stage on the ribosome. In Neisseria meningitidis serogroup C (strain 053442), this protein is Elongation factor Ts.